Reading from the N-terminus, the 407-residue chain is MSIENNKASVKKVVLAYSGGLDTSAIIPWLKETYDNCEIVAFCADVGQGEAELEGLHEKAIASGASECYIVDLKEELVADYIYPTIATGAIYEGTYLLGTSMARPIIAKAQVEVARKVGADAVCHGCTGKGNDQVRFEGCFAALAPDLTVIAPWREWSMVSREDLLDYLAERNIKTTASATKIYSRDANAWHISHEGGELEDPWNEPSKEVWTMTVAPEDAPDEPEYVSVEMEAGRITKVNGQSYTPYGALMALNEIAGAHGVGRIDITENRLVGMKSRGCYETPGGTVMFAALRAIEELVLDKTSREWREQVGAKMAHLVYDGRWFTPLCESLLGASQPLANLLNGEVVLKLYKGQAQAVKKRSPNSLYSEEFATFGEDEVYNQKDAEGFIRLYSLASRIRALNVK.

ATP is bound by residues 16–24 (AYSGGLDTS) and Ala44. The L-citrulline site is built by Tyr96 and Ser101. Gly126 provides a ligand contact to ATP. Residues Thr128, Asn132, and Asp133 each contribute to the L-aspartate site. Position 132 (Asn132) interacts with L-citrulline. 5 residues coordinate L-citrulline: Arg136, Ser185, Ser194, Glu270, and Tyr282.

Belongs to the argininosuccinate synthase family. Type 1 subfamily. In terms of assembly, homotetramer.

Its subcellular location is the cytoplasm. It catalyses the reaction L-citrulline + L-aspartate + ATP = 2-(N(omega)-L-arginino)succinate + AMP + diphosphate + H(+). It functions in the pathway amino-acid biosynthesis; L-arginine biosynthesis; L-arginine from L-ornithine and carbamoyl phosphate: step 2/3. This Shewanella loihica (strain ATCC BAA-1088 / PV-4) protein is Argininosuccinate synthase.